A 431-amino-acid polypeptide reads, in one-letter code: Glutamyl-tRNA(Gln) amidotransferase subunit A (431 aa).

Active-site charge relay system residues include Lys-37 and Ser-112. Ser-136 (acyl-ester intermediate) is an active-site residue.

The protein belongs to the amidase family. GatA subfamily. Heterotrimer of A, B and C subunits.

The enzyme catalyses L-glutamyl-tRNA(Gln) + L-glutamine + ATP + H2O = L-glutaminyl-tRNA(Gln) + L-glutamate + ADP + phosphate + H(+). Allows the formation of correctly charged Gln-tRNA(Gln) through the transamidation of misacylated Glu-tRNA(Gln) in organisms which lack glutaminyl-tRNA synthetase. The reaction takes place in the presence of glutamine and ATP through an activated gamma-phospho-Glu-tRNA(Gln). The sequence is that of Glutamyl-tRNA(Gln) amidotransferase subunit A from Methanospirillum hungatei JF-1 (strain ATCC 27890 / DSM 864 / NBRC 100397 / JF-1).